The following is a 200-amino-acid chain: Protein GrpE (200 aa).

Positions 1 to 25 (MMSKQNKKDWKKFKDEHKEEHKVEN) are enriched in basic and acidic residues. Residues 1–52 (MMSKQNKKDWKKFKDEHKEEHKVENEILEEETDEESQHQEPALGHPSYTALE) are disordered.

This sequence belongs to the GrpE family. Homodimer.

The protein resides in the cytoplasm. In terms of biological role, participates actively in the response to hyperosmotic and heat shock by preventing the aggregation of stress-denatured proteins, in association with DnaK and GrpE. It is the nucleotide exchange factor for DnaK and may function as a thermosensor. Unfolded proteins bind initially to DnaJ; upon interaction with the DnaJ-bound protein, DnaK hydrolyzes its bound ATP, resulting in the formation of a stable complex. GrpE releases ADP from DnaK; ATP binding to DnaK triggers the release of the substrate protein, thus completing the reaction cycle. Several rounds of ATP-dependent interactions between DnaJ, DnaK and GrpE are required for fully efficient folding. The protein is Protein GrpE of Legionella pneumophila subsp. pneumophila (strain Philadelphia 1 / ATCC 33152 / DSM 7513).